The following is a 527-amino-acid chain: RUS family member 1 (527 aa).

The N-linked (GlcNAc...) asparagine glycan is linked to Asn21. The chain crosses the membrane as a helical span at residues 220 to 240; that stretch reads SQETAVNLVGMLLSVIVSSFI. Asn243 carries an N-linked (GlcNAc...) asparagine glycan. Residues 245–265 form a helical membrane-spanning segment; sequence SLIVTWLVFLFFTSLHLFCNY. N-linked (GlcNAc...) asparagine glycosylation is present at Asn346. The disordered stretch occupies residues 350–426; it reads TKNVNNNNNN…NNNNNNNNNK (77 aa). Asn467 and Asn497 each carry an N-linked (GlcNAc...) asparagine glycan.

The protein belongs to the RUS1 family.

It is found in the membrane. This is RUS family member 1 (rusf1) from Dictyostelium discoideum (Social amoeba).